The chain runs to 195 residues: Orotate phosphoribosyltransferase (195 aa).

5-phospho-alpha-D-ribose 1-diphosphate is bound by residues arginine 87, lysine 91, and aspartate 112–serine 120. Threonine 116 and arginine 144 together coordinate orotate.

The protein belongs to the purine/pyrimidine phosphoribosyltransferase family. PyrE subfamily. In terms of assembly, homodimer. The cofactor is Mg(2+).

The enzyme catalyses orotidine 5'-phosphate + diphosphate = orotate + 5-phospho-alpha-D-ribose 1-diphosphate. The protein operates within pyrimidine metabolism; UMP biosynthesis via de novo pathway; UMP from orotate: step 1/2. Its function is as follows. Catalyzes the transfer of a ribosyl phosphate group from 5-phosphoribose 1-diphosphate to orotate, leading to the formation of orotidine monophosphate (OMP). This Sulfurisphaera tokodaii (strain DSM 16993 / JCM 10545 / NBRC 100140 / 7) (Sulfolobus tokodaii) protein is Orotate phosphoribosyltransferase.